Here is a 422-residue protein sequence, read N- to C-terminus: Ferrochelatase, mitochondrial (422 aa).

The N-terminal 53 residues, 1–53 (MLSASANMAAALRAAGALLREPLVHGSSRACQPWRCQSGAAVAATTEKVHHAK), are a transit peptide targeting the mitochondrion. Lys-56 bears the N6-acetyllysine mark. 3 residues coordinate protoporphyrin IX: Arg-114, Tyr-122, and Ser-129. Lys-137 carries the N6-succinyllysine modification. Cys-195 is a binding site for [2Fe-2S] cluster. His-229 is a catalytic residue. Lys-289 carries the post-translational modification N6-acetyllysine; alternate. The residue at position 289 (Lys-289) is an N6-succinyllysine; alternate. The active site involves Asp-382. [2Fe-2S] cluster contacts are provided by Cys-402, Cys-405, and Cys-410. Lys-414 carries the N6-acetyllysine; alternate modification. An N6-succinyllysine; alternate modification is found at Lys-414.

Belongs to the ferrochelatase family. As to quaternary structure, homodimer. Homotetramer. Interaction with PGRMC1; the interaction results in decreased FECH activity. Interacts with ABCB10 and SLC25A37; this interaction forms an oligomeric complex. Forms a complex with ABCB7 and ABCB10, where a dimeric FECH bridges ABCB7 and ABCB10 homodimers; this complex may be required for cellular iron homeostasis, mitochondrial function and heme biosynthesis. Interacts with ABCB7 and ABCB10. Requires [2Fe-2S] cluster as cofactor. As to expression, erythroid and hepatic cells.

The protein localises to the mitochondrion inner membrane. The catalysed reaction is heme b + 2 H(+) = protoporphyrin IX + Fe(2+). Its pathway is porphyrin-containing compound metabolism; protoheme biosynthesis; protoheme from protoporphyrin-IX: step 1/1. Functionally, catalyzes the ferrous insertion into protoporphyrin IX. This Mus musculus (Mouse) protein is Ferrochelatase, mitochondrial.